The sequence spans 106 residues: Urease subunit beta (106 aa).

It belongs to the urease beta subunit family. In terms of assembly, heterotrimer of UreA (gamma), UreB (beta) and UreC (alpha) subunits. Three heterotrimers associate to form the active enzyme.

Its subcellular location is the cytoplasm. The enzyme catalyses urea + 2 H2O + H(+) = hydrogencarbonate + 2 NH4(+). It functions in the pathway nitrogen metabolism; urea degradation; CO(2) and NH(3) from urea (urease route): step 1/1. This is Urease subunit beta from Acinetobacter baumannii (strain ATCC 17978 / DSM 105126 / CIP 53.77 / LMG 1025 / NCDC KC755 / 5377).